We begin with the raw amino-acid sequence, 2206 residues long: Genome polyprotein (2206 aa).

Residue Gly-2 is the site of N-myristoyl glycine; by host attachment. Over 2–1517 (GAQVSSQKVG…NINRAMTILQ (1516 aa)) the chain is Cytoplasmic. Amphipathic alpha-helix stretches follow at residues 579 to 599 (GIED…LPKQ) and 579 to 603 (GIED…QDSL). Active-site for protease 2A activity residues include His-898 and Asp-916. Residues Cys-933 and Cys-935 each contribute to the Zn(2+) site. Cys-987 functions as the For protease 2A activity in the catalytic mechanism. Residues Cys-993 and His-995 each coordinate Zn(2+). Positions 1125 to 1197 (GDSWLKKFTE…HQSCPSQEHQ (73 aa)) are membrane-binding. Positions 1125–1263 (GDSWLKKFTE…SPGTGKSVAT (139 aa)) are oligomerization. The RNA-binding stretch occupies residues 1146 to 1150 (SNKIS). The region spanning 1229–1385 (EHTINNYIQF…GEYSRDGKLN (157 aa)) is the SF3 helicase domain. An ATP-binding site is contributed by 1253–1260 (GSPGTGKS). Residues Cys-1393, Cys-1396, Cys-1405, and Cys-1410 each contribute to the Zn(2+) site. Residues 1393–1410 (CKDCHQPANFKRCCPLVC) form a C4-type zinc finger. Positions 1437–1444 (ERNRRSNI) are RNA-binding. The oligomerization stretch occupies residues 1448–1453 (MEALFQ). An intramembrane segment occupies 1518–1533 (AVTTFAAVAGVVYVMY). At 1534–2206 (KLFAGHQGAY…TLYRRWLDSF (673 aa)) the chain is on the cytoplasmic side. O-(5'-phospho-RNA)-tyrosine is present on Tyr-1543. The Peptidase C3 domain occupies 1563-1741 (GPGFDYAVAM…FAAALKRSYF (179 aa)). Residues His-1602, Glu-1633, and Cys-1709 each act as for protease 3C activity in the active site. One can recognise a RdRp catalytic domain in the interval 1972–2087 (EKLFAFDYTG…SYPHEVDASL (116 aa)). Positions 1978 and 2073 each coordinate Mg(2+).

This sequence belongs to the picornaviruses polyprotein family. Interacts with capsid protein VP1 and capsid protein VP3 to form heterotrimeric protomers. As to quaternary structure, interacts with capsid protein VP0, and capsid protein VP3 to form heterotrimeric protomers. Interacts with human PVR. Five protomers subsequently associate to form pentamers which serve as building blocks for the capsid. Interacts with capsid protein VP2, capsid protein VP3 and capsid protein VP4 following cleavage of capsid protein VP0. In terms of assembly, interacts with capsid protein VP1 and capsid protein VP3 in the mature capsid. Interacts with capsid protein VP0 and capsid protein VP1 to form heterotrimeric protomers. Five protomers subsequently associate to form pentamers which serve as building blocks for the capsid. Interacts with capsid protein VP4 in the mature capsid. Interacts with protein 2C; this interaction may be important for virion morphogenesis. As to quaternary structure, interacts with capsid protein VP1 and capsid protein VP3. In terms of assembly, homodimer. Homohexamer; forms a hexameric ring structure with 6-fold symmetry characteristic of AAA+ ATPases. Interacts (via N-terminus) with host RTN3 (via reticulon domain); this interaction is important for viral replication. Interacts with capsid protein VP3; this interaction may be important for virion morphogenesis. As to quaternary structure, interacts with protein 3CD. In terms of assembly, homodimer. Interacts with host GBF1. Interacts (via GOLD domain) with host ACBD3 (via GOLD domain); this interaction allows the formation of a viral protein 3A/ACBD3 heterotetramer with a 2:2 stoichiometry, which will stimulate the recruitment of host PI4KB in order to synthesize PI4P at the viral RNA replication sites. Interacts with RNA-directed RNA polymerase. As to quaternary structure, interacts with protein 3AB and with RNA-directed RNA polymerase. In terms of assembly, interacts with Viral protein genome-linked and with protein 3CD. Mg(2+) is required as a cofactor. In terms of processing, specific enzymatic cleavages in vivo by the viral proteases yield processing intermediates and the mature proteins. Myristoylation is required for the formation of pentamers during virus assembly. Further assembly of 12 pentamers and a molecule of genomic RNA generates the provirion. Post-translationally, during virion maturation, immature virions are rendered infectious following cleavage of VP0 into VP4 and VP2. This maturation seems to be an autocatalytic event triggered by the presence of RNA in the capsid and it is followed by a conformational change infectious virion. In terms of processing, myristoylation is required during RNA encapsidation and formation of the mature virus particle. VPg is uridylylated by the polymerase into VPg-pUpU. This acts as a nucleotide-peptide primer for the genomic RNA replication.

The protein localises to the virion. Its subcellular location is the host cytoplasm. The protein resides in the host cytoplasmic vesicle membrane. It localises to the host nucleus. It carries out the reaction a ribonucleoside 5'-triphosphate + H2O = a ribonucleoside 5'-diphosphate + phosphate + H(+). The catalysed reaction is Selective cleavage of Tyr-|-Gly bond in the picornavirus polyprotein.. The enzyme catalyses RNA(n) + a ribonucleoside 5'-triphosphate = RNA(n+1) + diphosphate. It catalyses the reaction Selective cleavage of Gln-|-Gly bond in the poliovirus polyprotein. In other picornavirus reactions Glu may be substituted for Gln, and Ser or Thr for Gly.. Its activity is regulated as follows. Replication or transcription is subject to high level of random mutations by the nucleotide analog ribavirin. Forms an icosahedral capsid of pseudo T=3 symmetry with capsid proteins VP2 and VP3. The capsid is 300 Angstroms in diameter, composed of 60 copies of each capsid protein and enclosing the viral positive strand RNA genome. Capsid protein VP1 mainly forms the vertices of the capsid. Capsid protein VP1 interacts with host cell receptor PVR to provide virion attachment to target host cells. This attachment induces virion internalization predominantly through clathrin- and caveolin-independent endocytosis in Hela cells and through caveolin-mediated endocytosis in brain microvascular endothelial cells. Tyrosine kinases are probably involved in the entry process. Virus binding to PVR induces increased junctional permeability and rearrangement of junctional proteins. Modulation of endothelial tight junctions, as well as cytolytic infection of endothelial cells themselves, may result in loss of endothelial integrity which may help the virus to reach the CNS. After binding to its receptor, the capsid undergoes conformational changes. Capsid protein VP1 N-terminus (that contains an amphipathic alpha-helix) and capsid protein VP4 are externalized. Together, they shape a pore in the host membrane through which viral genome is translocated to host cell cytoplasm. In terms of biological role, forms an icosahedral capsid of pseudo T=3 symmetry with capsid proteins VP2 and VP3. The capsid is 300 Angstroms in diameter, composed of 60 copies of each capsid protein and enclosing the viral positive strand RNA genome. Functionally, lies on the inner surface of the capsid shell. After binding to the host receptor, the capsid undergoes conformational changes. Capsid protein VP4 is released, Capsid protein VP1 N-terminus is externalized, and together, they shape a pore in the host membrane through which the viral genome is translocated into the host cell cytoplasm. Its function is as follows. Component of immature procapsids, which is cleaved into capsid proteins VP4 and VP2 after maturation. Allows the capsid to remain inactive before the maturation step. Cysteine protease that cleaves viral polyprotein and specific host proteins. It is responsible for the autocatalytic cleavage between the P1 and P2 regions, which is the first cleavage occurring in the polyprotein. Also cleaves the host translation initiation factor EIF4G1, in order to shut down the capped cellular mRNA translation. Inhibits the host nucleus-cytoplasm protein and RNA trafficking by cleaving host members of the nuclear pores including NUP98, NUP62 and NUP153. Counteracts stress granule formation probably by antagonizing its assembly or promoting its dissassembly. Cleaves and inhibits host IFIH1/MDA5, thereby inhibiting the type-I IFN production and the establishment of the antiviral state. Cleaves and inhibits host MAVS, thereby inhibiting the type-I IFN production and the establishment of the antiviral state. In terms of biological role, plays an essential role in the virus replication cycle by acting as a viroporin. Creates a pore in the host endoplasmic reticulum and as a consequence releases Ca2+ in the cytoplasm of infected cell. In turn, high levels of cytoplasmic calcium may trigger membrane trafficking and transport of viral ER-associated proteins to viroplasms, sites of viral genome replication. Functionally, induces and associates with structural rearrangements of intracellular membranes. Displays RNA-binding, nucleotide binding and NTPase activities. May play a role in virion morphogenesis and viral RNA encapsidation by interacting with the capsid protein VP3. Its function is as follows. Localizes the viral replication complex to the surface of membranous vesicles. Together with protein 3CD binds the Cis-Active RNA Element (CRE) which is involved in RNA synthesis initiation. Acts as a cofactor to stimulate the activity of 3D polymerase, maybe through a nucleid acid chaperone activity. Localizes the viral replication complex to the surface of membranous vesicles. It inhibits host cell endoplasmic reticulum-to-Golgi apparatus transport and causes the disassembly of the Golgi complex, possibly through GBF1 interaction. This would result in depletion of MHC, trail receptors and IFN receptors at the host cell surface. Plays an essential role in viral RNA replication by recruiting ACBD3 and PI4KB at the viral replication sites, thereby allowing the formation of the rearranged membranous structures where viral replication takes place. In terms of biological role, acts as a primer for viral RNA replication and remains covalently bound to viral genomic RNA. VPg is uridylylated prior to priming replication into VPg-pUpU. The oriI viral genomic sequence may act as a template for this. The VPg-pUpU is then used as primer on the genomic RNA poly(A) by the RNA-dependent RNA polymerase to replicate the viral genome. During genome replication, the VPg-RNA linkage is removed by the host TDP2, thereby accelerating replication. During the late stage of the replication cycle, host TDP2 is excluded from sites of viral RNA synthesis and encapsidation, allowing for the generation of progeny virions. Functionally, involved in the viral replication complex and viral polypeptide maturation. It exhibits protease activity with a specificity and catalytic efficiency that is different from protease 3C. Protein 3CD lacks polymerase activity. Protein 3CD binds to the 5'UTR of the viral genome. Its function is as follows. Major viral protease that mediates proteolytic processing of the polyprotein. Cleaves host EIF5B, contributing to host translation shutoff. Also cleaves host PABPC1, contributing to host translation shutoff. Cleaves host RIGI and thus contributes to the inhibition of type I interferon production. Cleaves host NLRP1, triggers host N-glycine-mediated degradation of the autoinhibitory NLRP1 N-terminal fragment. Inhibits the integrated stress response (ISR) in the infected cell by cleaving host G3BP1. Stress granule formation is thus inhibited, which allows protein synthesis and viral replication. Replicates the viral genomic RNA on the surface of intracellular membranes. May form linear arrays of subunits that propagate along a strong head-to-tail interaction called interface-I. Covalently attaches UMP to a tyrosine of VPg, which is used to prime RNA synthesis. The positive stranded RNA genome is first replicated at virus induced membranous vesicles, creating a dsRNA genomic replication form. This dsRNA is then used as template to synthesize positive stranded RNA genomes. ss(+)RNA genomes are either translated, replicated or encapsidated. This is Genome polyprotein from Poliovirus type 3 (strains P3/Leon/37 and P3/Leon 12A[1]B).